The primary structure comprises 294 residues: NAD kinase (294 aa).

Catalysis depends on aspartate 74, which acts as the Proton acceptor. NAD(+) is bound by residues 74 to 75 (DG), 148 to 149 (NE), histidine 159, arginine 176, aspartate 178, 189 to 194 (TAYSLS), and glutamine 249.

It belongs to the NAD kinase family. Requires a divalent metal cation as cofactor.

The protein localises to the cytoplasm. The catalysed reaction is NAD(+) + ATP = ADP + NADP(+) + H(+). Functionally, involved in the regulation of the intracellular balance of NAD and NADP, and is a key enzyme in the biosynthesis of NADP. Catalyzes specifically the phosphorylation on 2'-hydroxyl of the adenosine moiety of NAD to yield NADP. In Vibrio cholerae serotype O1 (strain ATCC 39541 / Classical Ogawa 395 / O395), this protein is NAD kinase.